The sequence spans 215 residues: Vesicle-trafficking protein SEC22b-A (215 aa).

Residues 1 to 190 are Cytoplasmic-facing; that stretch reads MVLQTMIVRV…RSDAKYLNTR (190 aa). The Longin domain occupies 6–119; sequence MIVRVADSLP…YSFIEFDTYI (114 aa). Residues 134–194 form the v-SNARE coiled-coil homology domain; it reads NLGNINSELH…KYLNTRSTYA (61 aa). The chain crosses the membrane as a helical span at residues 191–213; sequence STYAKVAAGAVIIITLIIYVRFW. Residues 214–215 lie on the Lumenal side of the membrane; sequence WL.

Belongs to the synaptobrevin family. In terms of assembly, component of 2 distinct SNARE complexes.

The protein localises to the endoplasmic reticulum membrane. It localises to the endoplasmic reticulum-Golgi intermediate compartment membrane. Its subcellular location is the golgi apparatus. The protein resides in the cis-Golgi network membrane. It is found in the trans-Golgi network membrane. The protein localises to the melanosome. SNARE involved in targeting and fusion of ER-derived transport vesicles with the Golgi complex as well as Golgi-derived retrograde transport vesicles with the ER. The polypeptide is Vesicle-trafficking protein SEC22b-A (Danio rerio (Zebrafish)).